The primary structure comprises 333 residues: MLVLGIESSCDETGVAVYDSESGLLSHALHSQIATHRVHGGVVPELASRDHVNYLVPLVDEVLTKAKIRKNQLDGIAYTAGPGLIGALLVGSCFAKSLAYALNIPALAIHHLEAHLLAAKMETPSLDFPFIALLVSGGHCQLIEVNNIGEYRLLGDTLDDAVGEAFDKTAKLMGIPYPGGAVLANLADQCLSTPYQFPRPMTDRPGLDFSFSGLKTHALNTWNQSAKKQGDRSEIAKAFQQAVVETLIIKCKRAIKESQSKRLVVAGGVGANKALRSALQKWINDIKGEVYFPALEYCTDNGAMVAYAGCLRMMRGESDGGLGVMVKPRWPLA.

The Fe cation site is built by histidine 111 and histidine 115. Substrate is bound by residues 134 to 138, aspartate 167, glycine 180, and asparagine 272; that span reads LVSGG. A Fe cation-binding site is contributed by aspartate 300.

Belongs to the KAE1 / TsaD family. It depends on Fe(2+) as a cofactor.

The protein localises to the cytoplasm. The catalysed reaction is L-threonylcarbamoyladenylate + adenosine(37) in tRNA = N(6)-L-threonylcarbamoyladenosine(37) in tRNA + AMP + H(+). In terms of biological role, required for the formation of a threonylcarbamoyl group on adenosine at position 37 (t(6)A37) in tRNAs that read codons beginning with adenine. Is involved in the transfer of the threonylcarbamoyl moiety of threonylcarbamoyl-AMP (TC-AMP) to the N6 group of A37, together with TsaE and TsaB. TsaD likely plays a direct catalytic role in this reaction. The sequence is that of tRNA N6-adenosine threonylcarbamoyltransferase from Legionella pneumophila (strain Lens).